A 263-amino-acid chain; its full sequence is Phosphoinositide-3-kinase-interacting protein 1 (263 aa).

A signal peptide spans 1–21 (MLLAWVQAFLVSNMLLAEAYG). Topologically, residues 22–168 (SGGCFWDNGH…NSKEKKDLGT (147 aa)) are extracellular. In terms of domain architecture, Kringle spans 24-101 (GCFWDNGHLY…EKRPCENLSC (78 aa)). Cystine bridges form between C25/C101, C46/C82, and C70/C96. N-linked (GlcNAc...) asparagine glycosylation is present at N98. Residues 169–189 (LGYVLGITMMVIIVAIGAGII) form a helical membrane-spanning segment. Residues 190–263 (LGYSYKRGKD…LMGQAGTPGA (74 aa)) are Cytoplasmic-facing. Residues 242–251 (QTPVDPQEGS) are compositionally biased toward polar residues. The disordered stretch occupies residues 242–263 (QTPVDPQEGSTPLMGQAGTPGA).

The protein resides in the cell membrane. Functionally, negative regulator of hepatic phosphatidylinositol 3-kinase (PI3K) activity. This Pongo abelii (Sumatran orangutan) protein is Phosphoinositide-3-kinase-interacting protein 1 (PIK3IP1).